The chain runs to 158 residues: 6,7-dimethyl-8-ribityllumazine synthase (158 aa).

5-amino-6-(D-ribitylamino)uracil-binding positions include Phe-24, 58–60 (AFE), and 82–84 (AVI). 87-88 (GT) contacts (2S)-2-hydroxy-3-oxobutyl phosphate. The active-site Proton donor is His-90. Phe-115 is a 5-amino-6-(D-ribitylamino)uracil binding site. Position 129 (Arg-129) interacts with (2S)-2-hydroxy-3-oxobutyl phosphate.

This sequence belongs to the DMRL synthase family. As to quaternary structure, forms an icosahedral capsid composed of 60 subunits, arranged as a dodecamer of pentamers.

The enzyme catalyses (2S)-2-hydroxy-3-oxobutyl phosphate + 5-amino-6-(D-ribitylamino)uracil = 6,7-dimethyl-8-(1-D-ribityl)lumazine + phosphate + 2 H2O + H(+). It functions in the pathway cofactor biosynthesis; riboflavin biosynthesis; riboflavin from 2-hydroxy-3-oxobutyl phosphate and 5-amino-6-(D-ribitylamino)uracil: step 1/2. Catalyzes the formation of 6,7-dimethyl-8-ribityllumazine by condensation of 5-amino-6-(D-ribitylamino)uracil with 3,4-dihydroxy-2-butanone 4-phosphate. This is the penultimate step in the biosynthesis of riboflavin. This Pseudomonas putida (strain GB-1) protein is 6,7-dimethyl-8-ribityllumazine synthase.